The primary structure comprises 145 residues: MERVAALGLDIGKKRVGVAGCDGTGLIATGLTTIIRSSFVADIPQFEAIVKERNIKILVAGLPYTMAGELGFQAQQVQKYAQKLAIALDLPLEYIDERCTSLEAEEFLKAKKQFSSWDKGAIDREAAAIILQQWLDRRRRVNTVV.

Belongs to the YqgF nuclease family.

Its subcellular location is the cytoplasm. In terms of biological role, could be a nuclease involved in processing of the 5'-end of pre-16S rRNA. The sequence is that of Putative pre-16S rRNA nuclease from Microcystis aeruginosa (strain NIES-843 / IAM M-2473).